A 440-amino-acid polypeptide reads, in one-letter code: Cysteine proteinase (440 aa).

Positions 1–60 are cleaved as a signal peptide; it reads MYSSSVVSNPNERLVNNRVENDLESSDDTLSTQAKPVSRLLTRKLLLGVVVLFFLAGVSV. The propeptide at 61–229 is activation peptide; the sequence is VSYFLFSKYK…DEDVDLAKLT (169 aa). Residues 166-182 are involved in processing to yield active enzymes; that stretch reads VKGINRFSDLTEREFYK. Asn-206 carries N-linked (GlcNAc...) asparagine glycosylation. Cysteines 250 and 291 form a disulfide. Active-site residues include Cys-253, His-382, and Asn-404.

The protein belongs to the peptidase C1 family.

This is Cysteine proteinase from Theileria parva (East coast fever infection agent).